We begin with the raw amino-acid sequence, 609 residues long: Nuclear factor 7, brain (609 aa).

Residues 21–75 (NVGSTYPCKRSDGSQHDAEIVKVRYNKQAGREEYYAHYVGLNRRQNEWVDKSRLV) form the Tudor-knot domain. Residues 74–84 (LVLTKPPKEGE) show a composition bias toward basic and acidic residues. The tract at residues 74 to 129 (LVLTKPPKEGETNGTDQEVTDTAEQPDSKTPQKRKIEEPEPEPKKAKVEEKDASKN) is disordered. Positions 85 to 102 (TNGTDQEVTDTAEQPDSK) are enriched in polar residues. Residue Thr-103 is modified to Phosphothreonine; by CDK1. Residues 107–127 (RKIEEPEPEPKKAKVEEKDAS) are compositionally biased toward basic and acidic residues. An RING-type zinc finger spans residues 145–185 (CPLCVELFKDPVMVACGHNFCRSCIDKAWEGQSSFACPECR). Residues 219 to 260 (RPLEKCSEHDERLKLYCKDDGTLSCVICRDSLKHASHNFLPI) form a B box-type zinc finger. Positions 224, 227, 246, and 252 each coordinate Zn(2+). The stretch at 278-371 (LEASLKVTEQ…SLAKERMEDT (94 aa)) forms a coiled coil. Residues 413-609 (GPIQYIMWKE…VDPLRFVHNK (197 aa)) enclose the B30.2/SPRY domain.

In terms of assembly, monomer. In terms of processing, threonine (predominantly) and serine residues are phosphorylated during oocyte maturation, when CDK1 is active. In terms of tissue distribution, at the neurula stage, high expression in dorsal embryo region including neural folds and somites. Also high expression in adult brain (CNS) and low expression in oocytes.

It localises to the nucleus. In terms of biological role, transcription factor that determines dorsal-ventral body axis. This is Nuclear factor 7, brain from Xenopus laevis (African clawed frog).